The chain runs to 308 residues: Hydroxyacylglutathione hydrolase, mitochondrial (308 aa).

Residues Met1–Leu13 constitute a mitochondrion transit peptide. Zn(2+)-binding residues include His102, His104, Asp106, and His107. Lys116 carries the post-translational modification N6-acetyllysine. 2 residues coordinate Zn(2+): His158 and Asp182. Substrate-binding positions include Lys191–Tyr193 and His221–Tyr223. His221 serves as a coordination point for Zn(2+). The residue at position 229 (Lys229) is an N6-acetyllysine; alternate. Lys229 is subject to N6-succinyllysine; alternate. Position 297–300 (Arg297–Lys300) interacts with substrate.

It belongs to the metallo-beta-lactamase superfamily. Glyoxalase II family. In terms of assembly, monomer. Zn(2+) serves as cofactor. As to expression, testis.

The protein localises to the mitochondrion matrix. The protein resides in the cytoplasm. The enzyme catalyses an S-(2-hydroxyacyl)glutathione + H2O = a 2-hydroxy carboxylate + glutathione + H(+). The catalysed reaction is (R)-S-lactoylglutathione + H2O = (R)-lactate + glutathione + H(+). Its pathway is secondary metabolite metabolism; methylglyoxal degradation; (R)-lactate from methylglyoxal: step 2/2. Its function is as follows. Thiolesterase that catalyzes the hydrolysis of S-D-lactoyl-glutathione to form glutathione and D-lactic acid. In Macaca fascicularis (Crab-eating macaque), this protein is Hydroxyacylglutathione hydrolase, mitochondrial (HAGH).